The sequence spans 125 residues: Translation initiation factor 5A (125 aa).

A Hypusine modification is found at Lys-35.

Belongs to the eIF-5A family.

Its subcellular location is the cytoplasm. Functions by promoting the formation of the first peptide bond. The chain is Translation initiation factor 5A (eIF5A) from Methanosphaerula palustris (strain ATCC BAA-1556 / DSM 19958 / E1-9c).